A 1396-amino-acid chain; its full sequence is Integrin alpha-PS2 (1396 aa).

A signal peptide spans 1 to 31 (MSGDSIHRRRMALHCPITSLILLLIAMSAHG). The Extracellular portion of the chain corresponds to 32–1341 (YNIDLPSYVR…EPEPLQVPDV (1310 aa)). FG-GAP repeat units lie at residues 36–106 (LPSY…DCKL), 117–174 (NVDK…FTSH), 186–239 (RTNN…FPFK), 266–317 (STSE…RWNM), 318–383 (ANIF…TEEK), 386–445 (TTEH…GPLA), and 452–514 (KSEQ…FASN). N-linked (GlcNAc...) asparagine glycosylation occurs at N69. The N-linked (GlcNAc...) asparagine glycan is linked to N209. A glycan (N-linked (GlcNAc...) asparagine) is linked at N322. N584, N598, N741, N783, N833, and N959 each carry an N-linked (GlcNAc...) asparagine glycan. Disordered regions lie at residues 960 to 1107 (STDA…LGTL) and 1159 to 1246 (PGFQ…KPLQ). The span at 963-979 (AGDKLSPKQVEQRRQED) shows a compositional bias: basic and acidic residues. Residues 997–1006 (QAVQEPQVNQ) show a composition bias toward polar residues. The N-linked (GlcNAc...) asparagine glycan is linked to N1005. Composition is skewed to low complexity over residues 1007-1021 (TSFT…SSGS) and 1060-1071 (QQQQQHQQLLLA). The span at 1082–1099 (VTFNDKSQFGGRNNNFHT) shows a compositional bias: polar residues. Low complexity-rich tracts occupy residues 1162–1182 (QGQT…GYQT) and 1217–1226 (SSSSSSSSSS). N-linked (GlcNAc...) asparagine glycans are attached at residues N1299 and N1307. The chain crosses the membrane as a helical span at residues 1342–1366 (VPLWVVVLAACAGALIFLLLVWLLY). Topologically, residues 1367–1396 (KCGFFNRNRPTDHSQERQPLRNGYHGDEHL) are cytoplasmic. The tract at residues 1377–1396 (TDHSQERQPLRNGYHGDEHL) is disordered.

It belongs to the integrin alpha chain family. As to quaternary structure, heterodimer of an alpha and a beta subunit. The alpha subunit is composed of a heavy and a light chain linked by a disulfide bond. Alpha-PS2 associates with beta-PS. The heavy-light chain cleavage site is either in 1230-1231, or 1233-1234, or 1243-1244. As to expression, in ovaries, highly expressed in follicle cells. At syncytial blastoderm stage, expressed in the embryonic mesodermal precursors but not in the ectoderm. At embryonic stages 7 and 10, expression is restricted to the mesoderm. At stage 12, expressed in the gonadal sheath and the interstitial cells of the gonad. In stage 16 embryos, expressed in the somatic and visceral muscles where localizes to sites of attachment between adjacent muscles. In third larval instar wing imaginal disk, expressed in the ventral compartment and in a subset of adepithelial and peripodial cells (at protein level).

The protein resides in the apical cell membrane. Its subcellular location is the lateral cell membrane. It localises to the basal cell membrane. Functionally, alpha-PS2/beta-PS is a receptor for Tig, wb and Ten-m. Involved in the function and/or development of the olfactory system. The polypeptide is Integrin alpha-PS2 (if) (Drosophila melanogaster (Fruit fly)).